The following is a 1320-amino-acid chain: Sister chromatid cohesion protein PDS5 homolog A (1320 aa).

HEAT repeat units lie at residues 156–195 (NEIF…EGDG), 272–310 (PLLL…AKDS), 388–426 (NLVN…KYCL), 709–747 (PQIR…NKEV), and 990–1028 (SLLP…CLWF). A compositionally biased stretch (polar residues) spans 1158–1179 (TFTSETGSNASTNSQPSSPATN). The disordered stretch occupies residues 1158–1320 (TFTSETGSNA…APQRQIDLQR (163 aa)). Over residues 1180–1194 (KSRDVSSEVGARENE) the composition is skewed to basic and acidic residues. The segment covering 1225 to 1241 (GTENSVSSNPSAGSQPP) has biased composition (polar residues). Over residues 1255–1267 (AGAATQEKEAGAT) the composition is skewed to low complexity. The segment covering 1283–1293 (QDPSSTASTDA) has biased composition (polar residues). The span at 1294-1309 (LSDKTPKQQKEAEPKR) shows a compositional bias: basic and acidic residues.

The protein belongs to the PDS5 family. Interacts with the cohesin complex. Binds chromatin in a cohesin-dependent manner.

It is found in the nucleus. Functionally, may regulate sister chromatid cohesion during mitosis and couple it to DNA replication. This is Sister chromatid cohesion protein PDS5 homolog A from Danio rerio (Zebrafish).